Here is a 1773-residue protein sequence, read N- to C-terminus: Mucin-22 (1773 aa).

Residues 1-26 (MRRGNISPAFWFLWLLLFGLLGPSSE) form the signal peptide. At 27–1660 (NTTAFTKGSD…VIKPSGYLQP (1634 aa)) the chain is on the extracellular side. Disordered stretches follow at residues 61–102 (TGSK…TDSG), 176–357 (TMAS…SETT), 372–405 (MGSETTTNSTTSSETTVTSTAGSETTTVSTVGSE), 434–572 (SETI…STAS), 590–674 (TVGS…EGSE), 754–1026 (DTTT…ETTM), 1064–1485 (TTIA…GSET), and 1603–1639 (MGASSTTSAHGVRTTTGSTREPTSSTFQETGPVSMGT). The tract at residues 153–1514 (MASSTTSTAG…PTATSLTGSE (1362 aa)) is 124 X 10 AA approximate repeats. Residues 178-243 (ASTTGSETAT…GSEATTTSTA (66 aa)) show a composition bias toward low complexity. Residues 248 to 258 (ITASSMSSETT) are compositionally biased toward polar residues. Over residues 262–357 (AAGSNTTTAS…TVSTAGSETT (96 aa)) the composition is skewed to low complexity. Low complexity-rich tracts occupy residues 440–481 (STAG…AAST) and 490–546 (STAG…SEPT). A compositionally biased stretch (polar residues) spans 547–572 (MASTMGSETTMASTIGPETTKVSTAS). 2 stretches are compositionally biased toward low complexity: residues 755–1025 (TTTA…SETT) and 1064–1465 (TTIA…GSET). Composition is skewed to polar residues over residues 1466–1485 (NTACTTGSETSTPSSAGSET) and 1615–1639 (RTTTGSTREPTSSTFQETGPVSMGT). Residues 1661–1681 (WAIILISLAAVVAAVGLSVGL) traverse the membrane as a helical segment. Over 1682–1773 (SFCLRNLFFP…GGHYGHGGGH (92 aa)) the chain is Cytoplasmic.

Expressed in lung by serous cells of the submucosal gland (at protein level). Detected in the placenta, lung and testis.

The protein resides in the membrane. In Homo sapiens (Human), this protein is Mucin-22 (MUC22).